The sequence spans 312 residues: Pantothenate kinase (312 aa).

97 to 104 (GSVAVGKS) contributes to the ATP binding site.

Belongs to the prokaryotic pantothenate kinase family.

Its subcellular location is the cytoplasm. The catalysed reaction is (R)-pantothenate + ATP = (R)-4'-phosphopantothenate + ADP + H(+). Its pathway is cofactor biosynthesis; coenzyme A biosynthesis; CoA from (R)-pantothenate: step 1/5. In Mycolicibacterium paratuberculosis (strain ATCC BAA-968 / K-10) (Mycobacterium paratuberculosis), this protein is Pantothenate kinase.